A 242-amino-acid polypeptide reads, in one-letter code: N-acetylmuramate alpha-1-phosphate uridylyltransferase (242 aa).

Residues 16–18 (GTR) and Lys-28 each bind UTP. Asn-113 provides a ligand contact to substrate. Residue Asp-115 participates in Mg(2+) binding. Substrate is bound at residue Asp-158.

The protein belongs to the nucleotidyltransferase MurU family. As to quaternary structure, monomer. Mg(2+) is required as a cofactor.

It carries out the reaction N-acetyl-alpha-D-muramate 1-phosphate + UDP + H(+) = UDP-N-acetyl-alpha-D-muramate + phosphate. The protein operates within cell wall biogenesis; peptidoglycan recycling. Its function is as follows. Catalyzes the formation of UDP-N-acetylmuramate (UDP-MurNAc), a crucial precursor of the bacterial peptidoglycan cell wall, from UTP and MurNAc-alpha-1P. Is likely involved in peptidoglycan recycling as part of a cell wall recycling pathway that bypasses de novo biosynthesis of the peptidoglycan precursor UDP-MurNAc. Is able to complement the fosfomycin sensitivity phenotype of a P.putida mutant lacking murU. This Caulobacter vibrioides (strain ATCC 19089 / CIP 103742 / CB 15) (Caulobacter crescentus) protein is N-acetylmuramate alpha-1-phosphate uridylyltransferase.